Here is a 675-residue protein sequence, read N- to C-terminus: Rho GTPase-activating protein 40 (675 aa).

Disordered regions lie at residues 95–118 (RDELREEDSGGNEGQLPEEGEAES) and 187–218 (KMSSENGDSGMKGAQLSSGASKFPPAAEPGGL). The segment covering 103–116 (SGGNEGQLPEEGEA) has biased composition (acidic residues). In terms of domain architecture, Rho-GAP spans 323–522 (VPLDSLLEAD…IMVHYQDLLW (200 aa)).

Its function is as follows. GTPase activator for the Rho-type GTPases by converting them to an inactive GDP-bound state. This chain is Rho GTPase-activating protein 40, found in Homo sapiens (Human).